The sequence spans 586 residues: Phosphomethylpyrimidine synthase (586 aa).

The segment at 1-59 is disordered; the sequence is MKQSVSAEQIELKSSLPGSKKVYVDGPREGMKVPMREIEQSDTNGVPNPPIRVYDTSGP. Over residues 22–39 the composition is skewed to basic and acidic residues; that stretch reads VYVDGPREGMKVPMREIE. Substrate contacts are provided by residues asparagine 193, methionine 222, tyrosine 251, histidine 287, 307-309, 348-351, and glutamate 387; these read SRG and DGLR. Position 391 (histidine 391) interacts with Zn(2+). Tyrosine 414 contributes to the substrate binding site. Histidine 455 serves as a coordination point for Zn(2+). Cysteine 535, cysteine 538, and cysteine 543 together coordinate [4Fe-4S] cluster.

It belongs to the ThiC family. [4Fe-4S] cluster is required as a cofactor.

It catalyses the reaction 5-amino-1-(5-phospho-beta-D-ribosyl)imidazole + S-adenosyl-L-methionine = 4-amino-2-methyl-5-(phosphooxymethyl)pyrimidine + CO + 5'-deoxyadenosine + formate + L-methionine + 3 H(+). It functions in the pathway cofactor biosynthesis; thiamine diphosphate biosynthesis. In terms of biological role, catalyzes the synthesis of the hydroxymethylpyrimidine phosphate (HMP-P) moiety of thiamine from aminoimidazole ribotide (AIR) in a radical S-adenosyl-L-methionine (SAM)-dependent reaction. The chain is Phosphomethylpyrimidine synthase from Bacillus cereus (strain ZK / E33L).